The chain runs to 372 residues: Spermidine/putrescine import ATP-binding protein PotA (372 aa).

An ABC transporter domain is found at 11-241; sequence IELRSIKKSY…PANLFVARFI (231 aa). 43–50 is a binding site for ATP; it reads GPSGCGKT.

It belongs to the ABC transporter superfamily. Spermidine/putrescine importer (TC 3.A.1.11.1) family. The complex is composed of two ATP-binding proteins (PotA), two transmembrane proteins (PotB and PotC) and a solute-binding protein (PotD).

It is found in the cell inner membrane. It carries out the reaction ATP + H2O + polyamine-[polyamine-binding protein]Side 1 = ADP + phosphate + polyamineSide 2 + [polyamine-binding protein]Side 1.. Part of the ABC transporter complex PotABCD involved in spermidine/putrescine import. Responsible for energy coupling to the transport system. The sequence is that of Spermidine/putrescine import ATP-binding protein PotA from Haemophilus influenzae (strain ATCC 51907 / DSM 11121 / KW20 / Rd).